We begin with the raw amino-acid sequence, 631 residues long: Phosphomethylpyrimidine synthase (631 aa).

Substrate is bound by residues Asn-231, Met-260, Tyr-289, His-325, 345–347, 386–389, and Glu-425; these read SRG and DGLR. His-429 serves as a coordination point for Zn(2+). Residue Tyr-452 participates in substrate binding. His-493 lines the Zn(2+) pocket. Cys-573, Cys-576, and Cys-581 together coordinate [4Fe-4S] cluster.

It belongs to the ThiC family. In terms of assembly, homodimer. The cofactor is [4Fe-4S] cluster.

It carries out the reaction 5-amino-1-(5-phospho-beta-D-ribosyl)imidazole + S-adenosyl-L-methionine = 4-amino-2-methyl-5-(phosphooxymethyl)pyrimidine + CO + 5'-deoxyadenosine + formate + L-methionine + 3 H(+). Its pathway is cofactor biosynthesis; thiamine diphosphate biosynthesis. Its function is as follows. Catalyzes the synthesis of the hydroxymethylpyrimidine phosphate (HMP-P) moiety of thiamine from aminoimidazole ribotide (AIR) in a radical S-adenosyl-L-methionine (SAM)-dependent reaction. The protein is Phosphomethylpyrimidine synthase of Acinetobacter baylyi (strain ATCC 33305 / BD413 / ADP1).